Consider the following 198-residue polypeptide: Probable chemoreceptor glutamine deamidase CheD (198 aa).

This sequence belongs to the CheD family.

The enzyme catalyses L-glutaminyl-[protein] + H2O = L-glutamyl-[protein] + NH4(+). In terms of biological role, probably deamidates glutamine residues to glutamate on methyl-accepting chemotaxis receptors (MCPs), playing an important role in chemotaxis. In Stenotrophomonas maltophilia (strain R551-3), this protein is Probable chemoreceptor glutamine deamidase CheD.